A 432-amino-acid chain; its full sequence is Glutamate-1-semialdehyde 2,1-aminomutase (432 aa).

At Lys272 the chain carries N6-(pyridoxal phosphate)lysine.

It belongs to the class-III pyridoxal-phosphate-dependent aminotransferase family. HemL subfamily. In terms of assembly, homodimer. Pyridoxal 5'-phosphate serves as cofactor.

It is found in the cytoplasm. It catalyses the reaction (S)-4-amino-5-oxopentanoate = 5-aminolevulinate. The protein operates within porphyrin-containing compound metabolism; protoporphyrin-IX biosynthesis; 5-aminolevulinate from L-glutamyl-tRNA(Glu): step 2/2. It functions in the pathway porphyrin-containing compound metabolism; chlorophyll biosynthesis. The protein is Glutamate-1-semialdehyde 2,1-aminomutase of Picosynechococcus sp. (strain ATCC 27264 / PCC 7002 / PR-6) (Agmenellum quadruplicatum).